We begin with the raw amino-acid sequence, 498 residues long: Phosphatidylserine synthase (498 aa).

Positions 1–65 are disordered; the sequence is MKKRTNSRGT…GSVSSAGARR (65 aa). Over 1–92 the chain is Cytoplasmic; it reads MKKRTNSRGT…VDDISLDFFY (92 aa). The segment covering 7–25 has biased composition (polar residues); the sequence is SRGTPTSSGDALLDTSFSS. Residues 93-113 traverse the membrane as a helical segment; sequence KPHTITLLAVSVLAVMYFAFV. Residues 114–122 are Lumenal-facing; it reads RNEANVDEN. A helical transmembrane segment spans residues 123-143; that stretch reads LWAGLLCIVFFFLIVSVIAFP. Topologically, residues 144–153 are cytoplasmic; sequence NGPFTRPHPA. A helical membrane pass occupies residues 154-174; the sequence is VWRILFGCSVLYLLTLQFLMF. At 175–239 the chain is on the lumenal side; the sequence is QNYPTIRSIF…AFKAILIRHM (65 aa). N205 carries an N-linked (GlcNAc...) asparagine glycan. The chain crosses the membrane as a helical span at residues 240–260; sequence GILWAISVMWEITEITFAHLL. At 261 to 266 the chain is on the cytoplasmic side; sequence PNFIEC. The helical transmembrane segment at 267–287 threads the bilayer; it reads WWDALILDVIICNGLGIWMGL. At 288–339 the chain is on the lumenal side; sequence KICQILEMREYKWASIKDISTTTGKIKRAMLQFTPESWSAIRWLDPKSTAMR. A helical transmembrane segment spans residues 340-360; that stretch reads FAAVIQLVIFWQVTELNTFFL. At 361–367 the chain is on the cytoplasmic side; that stretch reads KHIFEMP. A helical transmembrane segment spans residues 368–388; that stretch reads PDHFIVIGRLIFIGLFVAPSV. Residues 389 to 402 are Lumenal-facing; that stretch reads RQYYVYVTDTRCKR. Residues 403 to 423 traverse the membrane as a helical segment; sequence VGTQCWVYGAIMVSEAILCIK. Over 424-436 the chain is Cytoplasmic; that stretch reads NGKELFERTQAIN. The helical transmembrane segment at 437–457 threads the bilayer; the sequence is IVLWLTVQVIISVAFVYLAVY. Topologically, residues 458-498 are lumenal; that stretch reads WQQRQLKKVSSTPAKTKETIPASSSSPSKGKLSPQKEKKLK. A disordered region spans residues 465–498; that stretch reads KVSSTPAKTKETIPASSSSPSKGKLSPQKEKKLK. Low complexity predominate over residues 478–490; the sequence is PASSSSPSKGKLS.

Belongs to the phosphatidyl serine synthase family.

The protein localises to the endoplasmic reticulum membrane. The catalysed reaction is a 1,2-diacyl-sn-glycero-3-phosphoethanolamine + L-serine = a 1,2-diacyl-sn-glycero-3-phospho-L-serine + ethanolamine. The protein operates within phospholipid metabolism; phosphatidylserine biosynthesis. In terms of biological role, catalyzes a base-exchange reaction in which the polar head group of phosphatidylethanolamine (PE) is replaced by L-serine. The sequence is that of Phosphatidylserine synthase from Drosophila melanogaster (Fruit fly).